We begin with the raw amino-acid sequence, 250 residues long: MSGHSKWATTKHKKAIIDARRGKNFAKLIKNIEVAARTGGGDPGGNPTLYDAIQKAKKSSVPNDNIERARKRGAGEEAGGADWQTITYEGYGPNGVAVLIECLTDNRNRAAGEVRVAMTRNGGNMADPGSVSYLFSRKGVITLEKNGLSEDDVLMAVLEAGAEEVTDLGDSFEIISEPTDLVAVRTALQDAGIDYDSADASFQPSVTVPLDAEGARKVMKLVDALEDSDDVQDVYTNADIPDEILAQLEE.

Belongs to the TACO1 family.

Its subcellular location is the cytoplasm. In Mycobacterium sp. (strain KMS), this protein is Probable transcriptional regulatory protein Mkms_2298.